The following is a 485-amino-acid chain: Ribulose bisphosphate carboxylase large chain 2 (485 aa).

The substrate site is built by Asn-125 and Thr-175. Lys-177 (proton acceptor) is an active-site residue. Lys-179 contributes to the substrate binding site. Mg(2+) is bound by residues Lys-203, Asp-205, and Glu-206. Position 203 is an N6-carboxylysine (Lys-203). His-295 acts as the Proton acceptor in catalysis. Residues Arg-296, His-328, and Ser-380 each coordinate substrate.

It belongs to the RuBisCO large chain family. Type I subfamily. In terms of assembly, heterohexadecamer of 8 large chains and 8 small chains. Mg(2+) is required as a cofactor.

The enzyme catalyses 2 (2R)-3-phosphoglycerate + 2 H(+) = D-ribulose 1,5-bisphosphate + CO2 + H2O. It carries out the reaction D-ribulose 1,5-bisphosphate + O2 = 2-phosphoglycolate + (2R)-3-phosphoglycerate + 2 H(+). Functionally, ruBisCO catalyzes two reactions: the carboxylation of D-ribulose 1,5-bisphosphate, the primary event in carbon dioxide fixation, as well as the oxidative fragmentation of the pentose substrate. Both reactions occur simultaneously and in competition at the same active site. This is Ribulose bisphosphate carboxylase large chain 2 from Methylibium petroleiphilum (strain ATCC BAA-1232 / LMG 22953 / PM1).